Reading from the N-terminus, the 300-residue chain is Transcription initiation factor IIB 1 (300 aa).

The TFIIB-type zinc-finger motif lies at 3–34; that stretch reads GKRVCPVCGSTEFIYDPSRGEIVCKVCGYVIE. Residues C7, C10, C26, and C29 each coordinate Zn(2+). 2 consecutive repeat copies span residues 114–197 and 210–291.

This sequence belongs to the TFIIB family.

Functionally, stabilizes TBP binding to an archaeal box-A promoter. Also responsible for recruiting RNA polymerase II to the pre-initiation complex (DNA-TBP-TFIIB). The chain is Transcription initiation factor IIB 1 from Thermococcus kodakarensis (strain ATCC BAA-918 / JCM 12380 / KOD1) (Pyrococcus kodakaraensis (strain KOD1)).